The following is a 360-amino-acid chain: Phenylalanine--tRNA ligase alpha subunit (360 aa).

E264 serves as a coordination point for Mg(2+).

It belongs to the class-II aminoacyl-tRNA synthetase family. Phe-tRNA synthetase alpha subunit type 1 subfamily. Tetramer of two alpha and two beta subunits. Mg(2+) is required as a cofactor.

It localises to the cytoplasm. It carries out the reaction tRNA(Phe) + L-phenylalanine + ATP = L-phenylalanyl-tRNA(Phe) + AMP + diphosphate + H(+). The sequence is that of Phenylalanine--tRNA ligase alpha subunit from Streptomyces avermitilis (strain ATCC 31267 / DSM 46492 / JCM 5070 / NBRC 14893 / NCIMB 12804 / NRRL 8165 / MA-4680).